A 335-amino-acid polypeptide reads, in one-letter code: Nonaprenyl diphosphate synthase (335 aa).

Isopentenyl diphosphate contacts are provided by lysine 57, arginine 60, and histidine 90. Mg(2+) contacts are provided by aspartate 97 and aspartate 101. A DDXXD motif motif is present at residues 97–101 (DDVMD). Position 107 (arginine 107) interacts with isopentenyl diphosphate. Residues 223–227 (DDIID) carry the DDXXD motif motif.

It belongs to the FPP/GGPP synthase family. Mg(2+) serves as cofactor.

The enzyme catalyses isopentenyl diphosphate + (2E)-geranyl diphosphate = (2E,6E)-farnesyl diphosphate + diphosphate. It carries out the reaction isopentenyl diphosphate + (2E,6E)-farnesyl diphosphate = (2E,6E,10E)-geranylgeranyl diphosphate + diphosphate. The catalysed reaction is 5 isopentenyl diphosphate + (2E,6E,10E)-geranylgeranyl diphosphate = all-trans-nonaprenyl diphosphate + 5 diphosphate. The protein operates within isoprenoid biosynthesis; farnesyl diphosphate biosynthesis; farnesyl diphosphate from geranyl diphosphate and isopentenyl diphosphate. It participates in isoprenoid biosynthesis; geranylgeranyl diphosphate biosynthesis; geranylgeranyl diphosphate from farnesyl diphosphate and isopentenyl diphosphate: step 1/1. Functionally, catalyzes the sequential condensations of isopentenyl pyrophosphate (IPP) with geranyl diphosphate (GPP) to yield (2E,6E)-farnesyl diphosphate (E,E-FPP), with E,E-FPP to yield geranylgeranyl diphosphate (GGPP) and with GGPP to yield nonaprenyl diphosphate. May also have weak activity with dimethylallyl diphosphate (DMAPP). The chain is Nonaprenyl diphosphate synthase from Mycobacterium tuberculosis (strain ATCC 25618 / H37Rv).